The sequence spans 147 residues: Flagellar assembly factor FliW (147 aa).

This sequence belongs to the FliW family. As to quaternary structure, interacts with translational regulator CsrA and flagellin(s).

The protein resides in the cytoplasm. Functionally, acts as an anti-CsrA protein, binds CsrA and prevents it from repressing translation of its target genes, one of which is flagellin. Binds to flagellin and participates in the assembly of the flagellum. The chain is Flagellar assembly factor FliW from Treponema denticola (strain ATCC 35405 / DSM 14222 / CIP 103919 / JCM 8153 / KCTC 15104).